The chain runs to 277 residues: Pantothenate synthetase (277 aa).

26 to 33 (MGYLHQGH) lines the ATP pocket. His33 (proton donor) is an active-site residue. Position 57 (Gln57) interacts with (R)-pantoate. Gln57 provides a ligand contact to beta-alanine. 143 to 146 (GQKD) contacts ATP. Residue Gln149 participates in (R)-pantoate binding. ATP contacts are provided by residues Val172 and 180 to 183 (LSSR).

The protein belongs to the pantothenate synthetase family. Homodimer.

Its subcellular location is the cytoplasm. It carries out the reaction (R)-pantoate + beta-alanine + ATP = (R)-pantothenate + AMP + diphosphate + H(+). The protein operates within cofactor biosynthesis; (R)-pantothenate biosynthesis; (R)-pantothenate from (R)-pantoate and beta-alanine: step 1/1. Functionally, catalyzes the condensation of pantoate with beta-alanine in an ATP-dependent reaction via a pantoyl-adenylate intermediate. This Chloroflexus aggregans (strain MD-66 / DSM 9485) protein is Pantothenate synthetase.